Consider the following 360-residue polypeptide: DNA replication and repair protein RecF (360 aa).

30 to 37 (GQNGSGKT) contacts ATP.

This sequence belongs to the RecF family.

The protein resides in the cytoplasm. Its function is as follows. The RecF protein is involved in DNA metabolism; it is required for DNA replication and normal SOS inducibility. RecF binds preferentially to single-stranded, linear DNA. It also seems to bind ATP. This is DNA replication and repair protein RecF from Shewanella sp. (strain W3-18-1).